The primary structure comprises 264 residues: Thymidylate synthase (264 aa).

R21 is a dUMP binding site. H51 contacts (6R)-5,10-methylene-5,6,7,8-tetrahydrofolate. R126–R127 serves as a coordination point for dUMP. The Nucleophile role is filled by C146. DUMP contacts are provided by residues R166–D169, N177, and H207–Y209. D169 serves as a coordination point for (6R)-5,10-methylene-5,6,7,8-tetrahydrofolate. A263 contacts (6R)-5,10-methylene-5,6,7,8-tetrahydrofolate.

It belongs to the thymidylate synthase family. Bacterial-type ThyA subfamily. In terms of assembly, homodimer.

The protein localises to the cytoplasm. The enzyme catalyses dUMP + (6R)-5,10-methylene-5,6,7,8-tetrahydrofolate = 7,8-dihydrofolate + dTMP. It functions in the pathway pyrimidine metabolism; dTTP biosynthesis. Its function is as follows. Catalyzes the reductive methylation of 2'-deoxyuridine-5'-monophosphate (dUMP) to 2'-deoxythymidine-5'-monophosphate (dTMP) while utilizing 5,10-methylenetetrahydrofolate (mTHF) as the methyl donor and reductant in the reaction, yielding dihydrofolate (DHF) as a by-product. This enzymatic reaction provides an intracellular de novo source of dTMP, an essential precursor for DNA biosynthesis. The sequence is that of Thymidylate synthase from Rhizobium etli (strain ATCC 51251 / DSM 11541 / JCM 21823 / NBRC 15573 / CFN 42).